The following is an 808-amino-acid chain: Anaphase-promoting complex subunit 4 (808 aa).

A Phosphotyrosine modification is found at Y469. A phosphoserine mark is found at S757 and S758. A Glycyl lysine isopeptide (Lys-Gly) (interchain with G-Cter in SUMO2) cross-link involves residue K772. Residues S777 and S779 each carry the phosphoserine modification. A Glycyl lysine isopeptide (Lys-Gly) (interchain with G-Cter in SUMO2) cross-link involves residue K798.

It belongs to the APC4 family. The mammalian APC/C is composed at least of 14 distinct subunits ANAPC1, ANAPC2, CDC27/APC3, ANAPC4, ANAPC5, CDC16/APC6, ANAPC7, CDC23/APC8, ANAPC10, ANAPC11, CDC26/APC12, ANAPC13, ANAPC15 and ANAPC16 that assemble into a complex of at least 19 chains with a combined molecular mass of around 1.2 MDa; APC/C interacts with FZR1 and FBXO5. In the context of the APC/C complex, directly interacts with UBE2S. Interacts with FBXO43.

It localises to the nucleus. It functions in the pathway protein modification; protein ubiquitination. Component of the anaphase promoting complex/cyclosome (APC/C), a cell cycle-regulated E3 ubiquitin ligase that controls progression through mitosis and the G1 phase of the cell cycle. The APC/C complex acts by mediating ubiquitination and subsequent degradation of target proteins: it mainly mediates the formation of 'Lys-11'-linked polyubiquitin chains and, to a lower extent, the formation of 'Lys-48'- and 'Lys-63'-linked polyubiquitin chains. The APC/C complex catalyzes assembly of branched 'Lys-11'-/'Lys-48'-linked branched ubiquitin chains on target proteins. In Homo sapiens (Human), this protein is Anaphase-promoting complex subunit 4 (ANAPC4).